The following is a 184-amino-acid chain: Tumor necrosis factor receptor superfamily member 17 (184 aa).

Topologically, residues Met-1 to Ala-54 are extracellular. One copy of the TNFR-Cys repeat lies at Gln-7–Cys-41. 3 cysteine pairs are disulfide-bonded: Cys-8/Cys-21, Cys-24/Cys-37, and Cys-28/Cys-41. The chain crosses the membrane as a helical; Signal-anchor for type III membrane protein span at residues Ile-55–Leu-77. Residues Arg-78–Arg-184 are Cytoplasmic-facing.

As to quaternary structure, associates with TRAF1, TRAF2, TRAF3, TRAF5 and TRAF6. As to expression, expressed in mature B-cells, but not in T-cells or monocytes.

The protein resides in the cell membrane. Its subcellular location is the endomembrane system. Its function is as follows. Receptor for TNFSF13B/BLyS/BAFF and TNFSF13/APRIL. Promotes B-cell survival and plays a role in the regulation of humoral immunity. Activates NF-kappa-B and JNK. This is Tumor necrosis factor receptor superfamily member 17 (TNFRSF17) from Homo sapiens (Human).